The following is a 540-amino-acid chain: Chaperonin GroEL (540 aa).

Residues 29–32, 86–90, G413, 476–478, and D492 contribute to the ATP site; these read TLGP, DGTTT, and NAA.

This sequence belongs to the chaperonin (HSP60) family. Forms a cylinder of 14 subunits composed of two heptameric rings stacked back-to-back. Interacts with the co-chaperonin GroES.

The protein resides in the cytoplasm. It carries out the reaction ATP + H2O + a folded polypeptide = ADP + phosphate + an unfolded polypeptide.. Its function is as follows. Together with its co-chaperonin GroES, plays an essential role in assisting protein folding. The GroEL-GroES system forms a nano-cage that allows encapsulation of the non-native substrate proteins and provides a physical environment optimized to promote and accelerate protein folding. The protein is Chaperonin GroEL of Streptococcus agalactiae.